Consider the following 948-residue polypeptide: MADDIELNFAVPASGLVRQVAPKKGGRWTDRVRAKREARDAFKSMKANHLTVQNPSMPTVSASELVPKPAVIKPAPTSASVSRHPQPKSQVVAPPRFTNATAGPSRPAPSPQAASSNVPKSASIPAPATIKHRTSLPTNAFERPPLPPQAGPSRPHPAEKLKTPQFISSLFTSAPLPGVKSSVAPEISTGAPSNAPVDTTTFQGLGLNKLLINHLKGKMGVEKPTGIQRNCLPYMLSSPLNPDKKAGDEGPKEEPLRDVLIQAQTGSGKTLSYLLPIVQTLLPLSRLSYIDRSIGTLAIILAPTRELAQQISKVLEQLLHMSFAASKEGSDDEDEDDRPFTRWLVSGLLTGGSTRTHEKAKLRKGVPILVSTPGRLLDHLQNTMSFQCAKTMFLVLDEADRLMDLGFEETIQGIIKALEGRRRNEINIEKEMDKEGGGTMRWPFWDRGRLNVLCSATVDAKVERLAGAALRDPVLFRSEKDEAEAKKKAEGKDDAVIKALNEAQAIVIPQESEEKFTPPSQLSQKYVVLPTKLRLVALVALLRSLISSVAKGISVSNGTKVIVFLSSTDAVDFHWKLLGGVQMGQQGQQADGEKEEDEEEEGESVEERESDGESKAKKSKRKAKSKSTDDIVSLASPLFPNTTLHRLHGSLPLRTRLASLKAFATSSSQPSVLFATSVASRGLDLPLVRAVVQYDLPTEGGANEYVHRVGRTARAGKGGEAWAFVSPSEEGWVKWIEGKMGAAEGKSGVNLGQVGVEDVLRKGFGGKSYEYEARATDVQLSFENWVLASEQNAALARKAFASFVRAYSTHPLEEKQFFHTKLLHLGHLAKSFALREAPAQLASALSAGKSKRPKSKAASSATHPGKRKRDEDEDEMEERGGKELTARNETERRMYEAVRKQGRTIKSGGKLGEFSGKGQNKGQKAAATGGEFHIVNTGELERLVARRK.

Positions 43–160 are disordered; sequence KSMKANHLTV…GPSRPHPAEK (118 aa). 2 stretches are compositionally biased toward polar residues: residues 50-62 and 77-89; these read LTVQNPSMPTVSA and TSASVSRHPQPKS. Residues 200–229 carry the Q motif motif; that stretch reads TTFQGLGLNKLLINHLKGKMGVEKPTGIQR. The Helicase ATP-binding domain maps to 250–476; sequence GPKEEPLRDV…GAALRDPVLF (227 aa). 263–270 contacts ATP; that stretch reads AQTGSGKT. The DEAD box signature appears at 397 to 400; that stretch reads DEAD. Disordered regions lie at residues 583–626 and 844–929; these read MGQQ…AKSK and ALSA…AATG. Over residues 593–604 the composition is skewed to acidic residues; sequence EKEEDEEEEGES. Residues 597–757 form the Helicase C-terminal domain; that stretch reads DEEEEGESVE…GVNLGQVGVE (161 aa). Composition is skewed to basic and acidic residues over residues 605–616 and 878–899; these read VEERESDGESKA and ERGGKELTARNETERRMYEAVR.

This sequence belongs to the DEAD box helicase family. DDX31/DBP7 subfamily.

The protein resides in the nucleus. It localises to the nucleolus. It catalyses the reaction ATP + H2O = ADP + phosphate + H(+). Its function is as follows. ATP-binding RNA helicase involved in the biogenesis of 60S ribosomal subunits and is required for the normal formation of 25S and 5.8S rRNAs. The chain is ATP-dependent RNA helicase DBP7 (DBP7) from Cryptococcus neoformans var. neoformans serotype D (strain B-3501A) (Filobasidiella neoformans).